The sequence spans 177 residues: Peptidyl-prolyl cis-trans isomerase H (177 aa).

At alanine 2 the chain carries N-acetylalanine. The PPIase cyclophilin-type domain maps to 14-176 (FFDVSIGGQE…LPVVISQCGE (163 aa)).

It belongs to the cyclophilin-type PPIase family. PPIase H subfamily. As to quaternary structure, interacts directly with PRPF4. Part of a heteromeric complex containing PPIH, PRPF3 and PRPF4 that is stable in the absence of RNA. Component of the U4/U6-U5 tri-snRNP complex composed of the U4, U6 and U5 snRNAs and at least PRPF3, PRPF4, PRPF6, PRPF8, PRPF31, SNRNP200, TXNL4A, SNRNP40, DDX23, CD2BP2, PPIH, SNU13, EFTUD2, SART1 and USP39. Heterodimer with PRPF18.

Its subcellular location is the nucleus speckle. It is found in the cytoplasm. The enzyme catalyses [protein]-peptidylproline (omega=180) = [protein]-peptidylproline (omega=0). With respect to regulation, inhibited by cyclosporin A. Its function is as follows. PPIase that catalyzes the cis-trans isomerization of proline imidic peptide bonds in oligopeptides and may therefore assist protein folding. Participates in pre-mRNA splicing. May play a role in the assembly of the U4/U5/U6 tri-snRNP complex, one of the building blocks of the spliceosome. May act as a chaperone. This is Peptidyl-prolyl cis-trans isomerase H (PPIH) from Homo sapiens (Human).